The sequence spans 208 residues: Cytochrome c oxidase assembly protein CtaG (208 aa).

Topologically, residues 1 to 19 (MKQRPTGPDTTPRNRRGFG) are cytoplasmic. Residues 20-42 (RDTAVASVCGLVVALMVGASYAA) form a helical; Signal-anchor for type II membrane protein membrane-spanning segment. Topologically, residues 43-208 (VPFYNWFCRV…SEAGPRQGAL (166 aa)) are periplasmic.

The protein belongs to the COX11/CtaG family.

Its subcellular location is the cell inner membrane. Exerts its effect at some terminal stage of cytochrome c oxidase synthesis, probably by being involved in the insertion of the copper B into subunit I. This chain is Cytochrome c oxidase assembly protein CtaG, found in Rhodopseudomonas palustris (strain BisA53).